The primary structure comprises 433 residues: Sulfhydrylase FUB7 (433 aa).

Lys-211 carries the N6-(pyridoxal phosphate)lysine modification.

This sequence belongs to the trans-sulfuration enzymes family. The cofactor is pyridoxal 5'-phosphate.

Its pathway is mycotoxin biosynthesis. Functionally, sulfhydrylase; part of the gene cluster that mediates the biosynthesis of fusaric acid, a mycotoxin with low to moderate toxicity to animals and humans, but with high phytotoxic properties. L-aspartate is suggested as fusaric acid amino acid precursor that is activated and further processed to O-acetyl-L-homoserine by cluster enzymes aspartate kinase FUB3 and homoserine O-acetyltransferase FUB5, as well as enzymes of the primary metabolism. The polyketide synthase (PKS) FUB1 generates the triketide trans-2-hexenal which is presumptively released by the hydrolase FUB4 and linked to the NRPS-bound amino acid precursor by NAD(P)-dependent dehydrogenase FUB6. FUB1, FUB4, and the non-canonical NRPS Fub8 may form an enzyme complex. Further processing of the NRPS-bound intermediate might be carried out by FUB6 and the O-acetylhomoserine FUB7, enabling a spontaneous electrocyclization to close the carbon backbone of fusaric acid. Dihydrofusaric acid is likely to be released via reduction by the thioester reductase (TR) domain of FUB8 whereupon the final oxidation to fusaric acid may (also) be performed by the FMN-dependent dehydrogenase FUB9. This chain is Sulfhydrylase FUB7, found in Gibberella moniliformis (strain M3125 / FGSC 7600) (Maize ear and stalk rot fungus).